We begin with the raw amino-acid sequence, 242 residues long: 1-(5-phosphoribosyl)-5-[(5-phosphoribosylamino)methylideneamino] imidazole-4-carboxamide isomerase (242 aa).

The active-site Proton acceptor is the Asp8. Asp129 functions as the Proton donor in the catalytic mechanism.

Belongs to the HisA/HisF family.

The protein resides in the cytoplasm. The enzyme catalyses 1-(5-phospho-beta-D-ribosyl)-5-[(5-phospho-beta-D-ribosylamino)methylideneamino]imidazole-4-carboxamide = 5-[(5-phospho-1-deoxy-D-ribulos-1-ylimino)methylamino]-1-(5-phospho-beta-D-ribosyl)imidazole-4-carboxamide. It functions in the pathway amino-acid biosynthesis; L-histidine biosynthesis; L-histidine from 5-phospho-alpha-D-ribose 1-diphosphate: step 4/9. This chain is 1-(5-phosphoribosyl)-5-[(5-phosphoribosylamino)methylideneamino] imidazole-4-carboxamide isomerase, found in Clostridium botulinum (strain Langeland / NCTC 10281 / Type F).